The primary structure comprises 80 residues: Small ribosomal subunit protein bS16c (80 aa).

The protein belongs to the bacterial ribosomal protein bS16 family.

Its subcellular location is the plastid. The protein resides in the chloroplast. This Lotus japonicus (Lotus corniculatus var. japonicus) protein is Small ribosomal subunit protein bS16c.